The chain runs to 727 residues: Catalase-peroxidase (727 aa).

The tract at residues 1 to 26 (MSDEKKCPVTGRTSSQVAGSGTSNKD) is disordered. The span at 11–26 (GRTSSQVAGSGTSNKD) shows a compositional bias: polar residues. Residues 96 to 219 (WHSAGTYRIG…LAAVQMGLIY (124 aa)) constitute a cross-link (tryptophyl-tyrosyl-methioninium (Trp-Tyr) (with M-245)). The Proton acceptor role is filled by H97. The tryptophyl-tyrosyl-methioninium (Tyr-Met) (with W-96) cross-link spans 219–245 (YVNPEGPNGDPNAVASGKDVRETFARM). Residue H260 participates in heme b binding. The span at 346–362 (SDPEAKKAVPDAHDPSK) shows a compositional bias: basic and acidic residues. Positions 346 to 365 (SDPEAKKAVPDAHDPSKTHP) are disordered.

It belongs to the peroxidase family. Peroxidase/catalase subfamily. As to quaternary structure, homodimer or homotetramer. Heme b is required as a cofactor. Formation of the three residue Trp-Tyr-Met cross-link is important for the catalase, but not the peroxidase activity of the enzyme.

The enzyme catalyses H2O2 + AH2 = A + 2 H2O. It carries out the reaction 2 H2O2 = O2 + 2 H2O. Its function is as follows. Bifunctional enzyme with both catalase and broad-spectrum peroxidase activity. The chain is Catalase-peroxidase from Maridesulfovibrio salexigens (strain ATCC 14822 / DSM 2638 / NCIMB 8403 / VKM B-1763) (Desulfovibrio salexigens).